The chain runs to 372 residues: Chaperone protein DnaJ (372 aa).

Residues 5–70 (DYYEVLGVSK…QKRAAYDQYG (66 aa)) form the J domain. Residues 127 to 205 (GVTKEIRIPT…CHGHGRVERY (79 aa)) form a CR-type zinc finger. Zn(2+)-binding residues include Cys140, Cys143, Cys157, Cys160, Cys179, Cys182, Cys193, and Cys196. CXXCXGXG motif repeat units lie at residues 140-147 (CDICHGSG), 157-164 (CSTCQGAG), 179-186 (CPHCHGRG), and 193-200 (CHKCHGHG).

It belongs to the DnaJ family. Homodimer. It depends on Zn(2+) as a cofactor.

The protein resides in the cytoplasm. Participates actively in the response to hyperosmotic and heat shock by preventing the aggregation of stress-denatured proteins and by disaggregating proteins, also in an autonomous, DnaK-independent fashion. Unfolded proteins bind initially to DnaJ; upon interaction with the DnaJ-bound protein, DnaK hydrolyzes its bound ATP, resulting in the formation of a stable complex. GrpE releases ADP from DnaK; ATP binding to DnaK triggers the release of the substrate protein, thus completing the reaction cycle. Several rounds of ATP-dependent interactions between DnaJ, DnaK and GrpE are required for fully efficient folding. Also involved, together with DnaK and GrpE, in the DNA replication of plasmids through activation of initiation proteins. The sequence is that of Chaperone protein DnaJ from Photorhabdus laumondii subsp. laumondii (strain DSM 15139 / CIP 105565 / TT01) (Photorhabdus luminescens subsp. laumondii).